Here is a 211-residue protein sequence, read N- to C-terminus: Urease accessory protein UreG (211 aa).

GTP is bound at residue 13–20 (GPVGSGKT).

Belongs to the SIMIBI class G3E GTPase family. UreG subfamily. As to quaternary structure, homodimer. UreD, UreF and UreG form a complex that acts as a GTP-hydrolysis-dependent molecular chaperone, activating the urease apoprotein by helping to assemble the nickel containing metallocenter of UreC. The UreE protein probably delivers the nickel.

It is found in the cytoplasm. Functionally, facilitates the functional incorporation of the urease nickel metallocenter. This process requires GTP hydrolysis, probably effectuated by UreG. This Alkalilimnicola ehrlichii (strain ATCC BAA-1101 / DSM 17681 / MLHE-1) protein is Urease accessory protein UreG.